The chain runs to 701 residues: MGDNIVINLNNVSRSYGNVKVIEKLNFTINKGTINSLIGSSGSGKTTILKTILGKLKQDDGIVQVFGKEPCGKGSEIPGSSVGYAPQDVCLYNEITIEETLSFFASIHRMPKDEYIKKRDSLVEILELPSLSKIISELSGGQQRRVSLATALIHSPKLLILDEPTVGVCPLVSSKIWEHLIFLTKNFGVTIIITTHYLQECRSCDNIFLLRNGRILESGPPNYLLSKYECSLLEDVYYKLCRGDEEISLQLIDSKNNEKINRDINTSIPLEFISNGANINNDDILISNTNKPIIKKDAKIYKERLSDFKNKLQIWFSHSITISIRKLTQMYRLKFPLVFEIISPSLLITLFFLAIGNVPHDLKFGIKNIDSGSLSGDFINALSDGNNIFNFIQINDTSNAIQMIESSDLWGLIDIPVNFTNGMINKLFNPLEKSFENSEMEIYMDLSNFQMNLMVDVQFQKAFNKIANDSGIKLLPTNFHAVYGDQNANFNWFLAPAMICIITYVHCMNFLSITFVREKNDGTRDRILLYGVSPVSNVLGHILAHIPILLVQFSIQLLIAVFAFGVPIKGNIVLIYLFFILINTVGMCQGILISLISKAEVDAVQLCLAIFICSLCMAGIIWPTEAIITFGWISNLVPTKWSGLALRGIMIKDLPFSHQHIWKSLIIIISYIIGTFSLIVISTPIGDRNFNFKKLFKRIKK.

An ABC transporter domain is found at I7–Y237. Residue G39–T46 participates in ATP binding. The next 6 membrane-spanning stretches (helical) occupy residues F335–I355, F493–I513, H541–V561, L574–I596, L608–I628, and L665–I685. One can recognise an ABC transmembrane type-2 domain in the interval F459–G686.

The protein belongs to the ABC transporter superfamily. ABCG family.

Its subcellular location is the membrane. In Dictyostelium discoideum (Social amoeba), this protein is ABC transporter G family member 23 (abcG23).